Here is a 42-residue protein sequence, read N- to C-terminus: DRDSCVDKSRCQKYGNYAQCTACCKKAGHNKGTCDFFKCKCT.

Intrachain disulfides connect cysteine 5-cysteine 23, cysteine 11-cysteine 34, cysteine 20-cysteine 39, and cysteine 24-cysteine 41.

Belongs to the ergtoxin family. Gamma-KTx 3 subfamily. As to expression, expressed by the venom gland.

Its subcellular location is the secreted. In terms of biological role, blocks Kv11/ERG potassium channels. This chain is Potassium channel toxin gamma-KTx 3.4, found in Centruroides gracilis (Slenderbrown scorpion).